The following is a 147-amino-acid chain: 3-dehydroquinate dehydratase (147 aa).

Y24 serves as the catalytic Proton acceptor. Substrate contacts are provided by N73, H79, and D86. Catalysis depends on H99, which acts as the Proton donor. Substrate contacts are provided by residues 100-101 and R110; that span reads LS.

It belongs to the type-II 3-dehydroquinase family. As to quaternary structure, homododecamer.

It carries out the reaction 3-dehydroquinate = 3-dehydroshikimate + H2O. It functions in the pathway metabolic intermediate biosynthesis; chorismate biosynthesis; chorismate from D-erythrose 4-phosphate and phosphoenolpyruvate: step 3/7. Catalyzes a trans-dehydration via an enolate intermediate. In Hyphomonas neptunium (strain ATCC 15444), this protein is 3-dehydroquinate dehydratase.